The sequence spans 204 residues: Putative peroxiredoxin ycf42 (204 aa).

The region spanning 5 to 163 (PKIGKTPPNF…LLRILESIQY (159 aa)) is the Thioredoxin domain.

This sequence belongs to the peroxiredoxin family. AhpC/Prx1 subfamily.

The protein localises to the plastid. The protein resides in the chloroplast. The enzyme catalyses a hydroperoxide + [protein]-dithiol = [protein]-disulfide + an alcohol + H2O. This is Putative peroxiredoxin ycf42 (ycf42) from Trieres chinensis (Marine centric diatom).